We begin with the raw amino-acid sequence, 385 residues long: Serpin-Z1 (385 aa).

The interval 317-341 is RCL; it reads GAEAAAATADGDCGCSLDFVEPPKK.

It belongs to the serpin family.

Probable serine protease inhibitor. The polypeptide is Serpin-Z1 (Arabidopsis thaliana (Mouse-ear cress)).